The primary structure comprises 564 residues: MSDNRRSRMITEGPQRSPNRAMLRAVGFGDNDFTKPIVGVANGHSTLTPCNAGLGALAARAEAAIRAAGGMPQIFGTITVSDGISMGTEGMKYSLVSREVIADSIETVVNAQRMDGILAVGGCDKNMPGALIAMARLDIPAIFVYGGTIKPGHYKGRDLTIVSVFEAVGEYSAGRIDEHELLEIERHACPGVGSCGGMYTANTMSSAIEALGLSLPGSSTMAAEDEEKAISAARSGEVLVEAIRANRTARQMLTRKSFENAIAVVMALGGSTNAVLHLLAIAYAANVPLTIDDFETIRQRVPVLCDLKPSGRYVATDLHRVGGVPQVMKMLLNAGLLHGDCMTITGQTIAEVLADVPDEPPADQDVIRPFHKPLYPQGHLAILRGNLAEEGCVAKITGIKQRSITGPARVFDAEEECLEAILSGKIKPGDVVVIRYEGPKGGPGMREMLAPTSAIIGAGLGDSVGLITDGRFSGGTYGLVVGHVAPEAAVGGTIALVEEGDSITIDADARLLQLNVSDEELARRRAAWQPRPPRYTRGVLAKYARLVSSASLGAVTDRFDGESA.

A [2Fe-2S] cluster-binding site is contributed by Cys50. Asp82 contributes to the Mg(2+) binding site. [2Fe-2S] cluster is bound at residue Cys123. The Mg(2+) site is built by Asp124 and Lys125. Residue Lys125 is modified to N6-carboxylysine. Residue Cys195 coordinates [2Fe-2S] cluster. Glu447 serves as a coordination point for Mg(2+). Residue Ser473 is the Proton acceptor of the active site.

It belongs to the IlvD/Edd family. As to quaternary structure, homodimer. Requires [2Fe-2S] cluster as cofactor. Mg(2+) is required as a cofactor.

It catalyses the reaction (2R)-2,3-dihydroxy-3-methylbutanoate = 3-methyl-2-oxobutanoate + H2O. The catalysed reaction is (2R,3R)-2,3-dihydroxy-3-methylpentanoate = (S)-3-methyl-2-oxopentanoate + H2O. It functions in the pathway amino-acid biosynthesis; L-isoleucine biosynthesis; L-isoleucine from 2-oxobutanoate: step 3/4. The protein operates within amino-acid biosynthesis; L-valine biosynthesis; L-valine from pyruvate: step 3/4. Functions in the biosynthesis of branched-chain amino acids. Catalyzes the dehydration of (2R,3R)-2,3-dihydroxy-3-methylpentanoate (2,3-dihydroxy-3-methylvalerate) into 2-oxo-3-methylpentanoate (2-oxo-3-methylvalerate) and of (2R)-2,3-dihydroxy-3-methylbutanoate (2,3-dihydroxyisovalerate) into 2-oxo-3-methylbutanoate (2-oxoisovalerate), the penultimate precursor to L-isoleucine and L-valine, respectively. In Chloroflexus aggregans (strain MD-66 / DSM 9485), this protein is Dihydroxy-acid dehydratase.